The sequence spans 49 residues: Metallothionein (49 aa).

The interval 1-16 is beta; sequence SCAGSCKCKNCRCRSC. Residues Cys2, Cys6, Cys8, Cys11, Cys13, Cys16, Cys20, Cys21, Cys23, Cys24, Cys28, Cys31, Cys35, Cys37, Cys45, Cys47, and Cys48 each coordinate a divalent metal cation. Positions 17-49 are alpha; that stretch reads RKSCCSCCPAGCNNCAKGCVCKEPASSKCSCCH.

The protein belongs to the metallothionein superfamily. Type 1 family.

Metallothioneins have a high content of cysteine residues that bind various heavy metals. This chain is Metallothionein, found in Phasianus colchicus colchicus (Black-necked pheasant).